A 312-amino-acid polypeptide reads, in one-letter code: Glycerol-3-phosphate dehydrogenase [NAD(P)+] (312 aa).

NADPH contacts are provided by Trp-11, Arg-30, Arg-31, and Lys-95. Lys-95, Gly-123, and Ser-125 together coordinate sn-glycerol 3-phosphate. An NADPH-binding site is contributed by Ala-127. The sn-glycerol 3-phosphate site is built by Lys-177, Asp-230, Ser-240, Arg-241, and Asn-242. The active-site Proton acceptor is the Lys-177. Arg-241 is a binding site for NADPH. The NADPH site is built by Val-265 and Glu-267.

The protein belongs to the NAD-dependent glycerol-3-phosphate dehydrogenase family.

It localises to the cytoplasm. The enzyme catalyses sn-glycerol 3-phosphate + NAD(+) = dihydroxyacetone phosphate + NADH + H(+). The catalysed reaction is sn-glycerol 3-phosphate + NADP(+) = dihydroxyacetone phosphate + NADPH + H(+). The protein operates within membrane lipid metabolism; glycerophospholipid metabolism. Its function is as follows. Catalyzes the reduction of the glycolytic intermediate dihydroxyacetone phosphate (DHAP) to sn-glycerol 3-phosphate (G3P), the key precursor for phospholipid synthesis. The chain is Glycerol-3-phosphate dehydrogenase [NAD(P)+] from Helicobacter pylori (strain P12).